The sequence spans 288 residues: Acetyl-coenzyme A carboxylase carboxyl transferase subunit beta (288 aa).

The CoA carboxyltransferase N-terminal domain maps to 34–288; the sequence is LFAKCPACKH…HLVAFHGGVS (255 aa). Zn(2+)-binding residues include cysteine 38, cysteine 41, cysteine 56, and cysteine 59. The C4-type zinc finger occupies 38-59; that stretch reads CPACKHMIYQKDLGPAKICPTC.

Belongs to the AccD/PCCB family. Acetyl-CoA carboxylase is a heterohexamer composed of biotin carboxyl carrier protein (AccB), biotin carboxylase (AccC) and two subunits each of ACCase subunit alpha (AccA) and ACCase subunit beta (AccD). The cofactor is Zn(2+).

The protein localises to the cytoplasm. It carries out the reaction N(6)-carboxybiotinyl-L-lysyl-[protein] + acetyl-CoA = N(6)-biotinyl-L-lysyl-[protein] + malonyl-CoA. The protein operates within lipid metabolism; malonyl-CoA biosynthesis; malonyl-CoA from acetyl-CoA: step 1/1. In terms of biological role, component of the acetyl coenzyme A carboxylase (ACC) complex. Biotin carboxylase (BC) catalyzes the carboxylation of biotin on its carrier protein (BCCP) and then the CO(2) group is transferred by the transcarboxylase to acetyl-CoA to form malonyl-CoA. The polypeptide is Acetyl-coenzyme A carboxylase carboxyl transferase subunit beta (Streptococcus equi subsp. zooepidemicus (strain H70)).